A 144-amino-acid chain; its full sequence is Urease subunit beta (144 aa).

The segment covering 110–119 (HAAPAAPAIP) has biased composition (low complexity). A disordered region spans residues 110-144 (HAAPAAPAIPARHESAAGDAPSPLKERAGFDNETR). A compositionally biased stretch (basic and acidic residues) spans 133-144 (LKERAGFDNETR).

The protein belongs to the urease beta subunit family. Heterotrimer of UreA (gamma), UreB (beta) and UreC (alpha) subunits. Three heterotrimers associate to form the active enzyme.

Its subcellular location is the cytoplasm. It carries out the reaction urea + 2 H2O + H(+) = hydrogencarbonate + 2 NH4(+). The protein operates within nitrogen metabolism; urea degradation; CO(2) and NH(3) from urea (urease route): step 1/1. The chain is Urease subunit beta from Micrococcus luteus (strain ATCC 4698 / DSM 20030 / JCM 1464 / CCM 169 / CCUG 5858 / IAM 1056 / NBRC 3333 / NCIMB 9278 / NCTC 2665 / VKM Ac-2230) (Micrococcus lysodeikticus).